The following is a 66-amino-acid chain: Large ribosomal subunit protein bL31 (66 aa).

Residues cysteine 16, cysteine 18, cysteine 36, and cysteine 39 each coordinate Zn(2+).

This sequence belongs to the bacterial ribosomal protein bL31 family. Type A subfamily. In terms of assembly, part of the 50S ribosomal subunit. Zn(2+) serves as cofactor.

In terms of biological role, binds the 23S rRNA. This Moorella thermoacetica (strain ATCC 39073 / JCM 9320) protein is Large ribosomal subunit protein bL31.